Reading from the N-terminus, the 1001-residue chain is Receptor-type tyrosine-protein phosphatase N2 (1001 aa).

Residues 1-27 (MGPPLPLLLLLLLPPPLPRALPAPASA) form the signal peptide. The tract at residues 1–407 (MGPPLPLLLL…PEGPLLEKSS (407 aa)) is involved in localization to secretory granules; interaction with CPE. Over 28–600 (RGRQLPGRLG…HQEEQEDSTK (573 aa)) the chain is Extracellular. An Omega-N-methylarginine modification is found at Arg259. 3 disordered regions span residues 271–296 (PFSA…SMDD), 308–359 (QQNS…DAPE), and 394–459 (SPLL…LEDQ). Residues 312–325 (EVDRLGPLKEEKAD) show a composition bias toward basic and acidic residues. Ser339 carries the phosphoserine modification. A compositionally biased stretch (basic and acidic residues) spans 340-355 (QESHGRGAEGQPREQT). The segment covering 394 to 404 (SPLLPEGPLLE) has biased composition (low complexity). Basic and acidic residues predominate over residues 405–416 (KSSREEIKKSEQ). Residues 417 to 428 (PEEVLSSEEETA) show a composition bias toward acidic residues. Ser422 and Ser423 each carry phosphoserine. A compositionally biased stretch (basic and acidic residues) spans 429-459 (GVEHVRSRTYSKDLFERKPNSEPQPRRLEDQ). Asn550 carries an N-linked (GlcNAc...) asparagine glycan. A helical transmembrane segment spans residues 601 to 621 (FILLTFLSIACILGVLLASSL). Topologically, residues 622–1001 (AYCLRHNSHY…VNAILKALPQ (380 aa)) are cytoplasmic. Residues 652-661 (YQELCRQRMA) carry the Tyrosine-based internalization motif motif. Residues 663–705 (RPQDRSEGPHTSRINSVSSQFSDGPMPSPSARSSTSSWSEEPV) are disordered. Residues 674–684 (SRINSVSSQFS) are compositionally biased toward polar residues. Residues Ser678 and Ser684 each carry the phosphoserine modification. Low complexity predominate over residues 691-705 (PSARSSTSSWSEEPV). Thr697 carries the phosphothreonine modification. The 261-residue stretch at 731–991 (LEKEWEALCA…EFALTAVAEE (261 aa)) folds into the Tyrosine-protein phosphatase domain. Residues Asp899 and 931–937 (CSDGAGR) each bind substrate. The active-site Phosphocysteine intermediate is the Cys931. Lys956 bears the N6-acetyllysine mark. Gln976 is a substrate binding site. Residues 990 to 996 (EEVNAIL) carry the Leucine-based sorting signal motif.

Belongs to the protein-tyrosine phosphatase family. As to quaternary structure, self-associates. Interacts (via cytoplasmic domain) with PTPRN (via cytoplasmic domain). Interacts (precursor form) with CPE. Interacts with HAP1 isoform A. Interacts with AP2A1 or AP2A2 and AP1G1; indicative for an association with adaptor protein complex 2 (AP-2) and adaptor protein complex 1 (AP-1). Interacts with AP2M1; indicative for an association with adaptor protein complex 2 (AP-2). Interacts with MYO5A. In terms of processing, subject to proteolytic cleavage at multiple sites during maturation of secretory granules. In the brain at least IA-2beta71, IA-2beta64 and IA-2beta60 have been detected, in the pancreas and a pancreatic beta cell line only IA-2beta60 has been detected. As to expression, detected in brain. Detected in pancreas islets (at protein level). Detected in pancreas and brain.

It localises to the cytoplasmic vesicle. Its subcellular location is the secretory vesicle membrane. It is found in the secretory vesicle. The protein localises to the synaptic vesicle membrane. The catalysed reaction is O-phospho-L-tyrosyl-[protein] + H2O = L-tyrosyl-[protein] + phosphate. Plays a role in vesicle-mediated secretory processes. Required for normal accumulation of secretory vesicles in hippocampus, pituitary and pancreatic islets. Required for the accumulation of normal levels of insulin-containing vesicles and preventing their degradation. Plays a role in insulin secretion in response to glucose stimuli. Required for normal accumulation of the neurotransmitters norepinephrine, dopamine and serotonin in the brain. In females, but not in males, required for normal accumulation and secretion of pituitary hormones, such as luteinizing hormone (LH) and follicle-stimulating hormone (FSH). Required to maintain normal levels of renin expression and renin release. May regulate catalytic active protein-tyrosine phosphatases such as PTPRA through dimerization. Has phosphatidylinositol phosphatase activity; the PIPase activity is involved in its ability to regulate insulin secretion. Can dephosphorylate phosphatidylinositol 4,5-biphosphate (PI(4,5)P2), phosphatidylinositol 5-phosphate and phosphatidylinositol 3-phosphate. Regulates PI(4,5)P2 level in the plasma membrane and localization of cofilin at the plasma membrane and thus is indirectly involved in regulation of actin dynamics related to cell migration and metastasis; upon hydrolysis of PI(4,5)P2 cofilin is released from the plasma membrane and acts in the cytoplasm in severing F-actin filaments. The protein is Receptor-type tyrosine-protein phosphatase N2 (Ptprn2) of Mus musculus (Mouse).